The sequence spans 260 residues: Pyridoxine 5'-phosphate synthase (260 aa).

2 residues coordinate 3-amino-2-oxopropyl phosphate: N10 and R21. H46 serves as the catalytic Proton acceptor. R48 and H53 together coordinate 1-deoxy-D-xylulose 5-phosphate. The Proton acceptor role is filled by E76. T113 contributes to the 1-deoxy-D-xylulose 5-phosphate binding site. H204 functions as the Proton donor in the catalytic mechanism. 3-amino-2-oxopropyl phosphate-binding positions include D205 and 227–228 (GH).

This sequence belongs to the PNP synthase family. Homooctamer; tetramer of dimers.

Its subcellular location is the cytoplasm. It carries out the reaction 3-amino-2-oxopropyl phosphate + 1-deoxy-D-xylulose 5-phosphate = pyridoxine 5'-phosphate + phosphate + 2 H2O + H(+). It participates in cofactor biosynthesis; pyridoxine 5'-phosphate biosynthesis; pyridoxine 5'-phosphate from D-erythrose 4-phosphate: step 5/5. Functionally, catalyzes the complicated ring closure reaction between the two acyclic compounds 1-deoxy-D-xylulose-5-phosphate (DXP) and 3-amino-2-oxopropyl phosphate (1-amino-acetone-3-phosphate or AAP) to form pyridoxine 5'-phosphate (PNP) and inorganic phosphate. The protein is Pyridoxine 5'-phosphate synthase of Xylella fastidiosa (strain 9a5c).